The primary structure comprises 135 residues: Mini-ribonuclease 3 (135 aa).

Residue Asp17 is part of the active site.

This sequence belongs to the MrnC RNase family. Homodimer. It depends on Mg(2+) as a cofactor.

The protein localises to the cytoplasm. Its function is as follows. Involved in correct processing of both the 5' and 3' ends of 23S rRNA precursor. Processes 30S rRNA precursor transcript even in absence of ribonuclease 3 (Rnc); Rnc processes 30S rRNA into smaller rRNA precursors. This is Mini-ribonuclease 3 from Bacillus cereus (strain ATCC 14579 / DSM 31 / CCUG 7414 / JCM 2152 / NBRC 15305 / NCIMB 9373 / NCTC 2599 / NRRL B-3711).